A 368-amino-acid polypeptide reads, in one-letter code: 1-aminocyclopropane-1-carboxylate synthase (368 aa).

An N6-(pyridoxal phosphate)lysine modification is found at K230.

It belongs to the class-I pyridoxal-phosphate-dependent aminotransferase family. Homodimer. It depends on pyridoxal 5'-phosphate as a cofactor.

It catalyses the reaction S-adenosyl-L-methionine = 1-aminocyclopropane-1-carboxylate + S-methyl-5'-thioadenosine + H(+). It participates in alkene biosynthesis; ethylene biosynthesis via S-adenosyl-L-methionine; ethylene from S-adenosyl-L-methionine: step 1/2. Functionally, catalyzes the formation of 1-aminocyclopropane-1-carboxylate, a direct precursor of ethylene in higher plants. The chain is 1-aminocyclopropane-1-carboxylate synthase (ACS5) from Vigna radiata var. radiata (Mung bean).